Reading from the N-terminus, the 77-residue chain is UPF0401 protein UTI89_C4989 (77 aa).

It belongs to the UPF0401 family.

In Escherichia coli (strain UTI89 / UPEC), this protein is UPF0401 protein UTI89_C4989.